The following is a 527-amino-acid chain: FHA domain-containing protein FhaA (527 aa).

Threonine 116 is subject to Phosphothreonine. Residues 119–426 form a disordered region; sequence FRARGTVNPD…APGGYSGYGQ (308 aa). A compositionally biased stretch (basic and acidic residues) spans 170–188; that stretch reads RPDEYYDDRYARPQEDPRG. Composition is skewed to low complexity over residues 199–209 and 256–266; these read RGGYPPETGGY and YQDQGRGYPDQ. The span at 271–283 shows a compositional bias: pro residues; it reads YPPPYEQRPPVSP. Residues 284 to 299 show a composition bias toward low complexity; it reads GPAAGYGAPGYDQGYR. Gly residues predominate over residues 300–322; sequence QSGGYGPSPGGGQPGYGGYGEYG. Positions 345–366 are enriched in low complexity; that stretch reads RPAYPDQGGYDQGYQQGATTYG. An FHA domain is found at 455–504; that stretch reads NIIGRGQDAQFRLPDTGVSRRHLEIRWDGQVALLADLNSTNGTTVNNAPV.

Interacts with (phosphorylated) MviN and (phosphorylated) PknB via the FHA domain. Binds to the PknB juxtamembrane domain with an affinity that is modulated by the degree and the pattern of phosphorylation of this juxtamembrane domain. Phosphorylated by PknB.

The protein localises to the cytoplasm. In terms of biological role, regulates cell growth and peptidoglycan synthesis by binding to MviN. May inhibit the late stages of peptidoglycan synthesis. In Mycobacterium tuberculosis (strain ATCC 25618 / H37Rv), this protein is FHA domain-containing protein FhaA (fhaA).